The chain runs to 132 residues: Putative nickel-responsive regulator (132 aa).

Ni(2+)-binding residues include His-77, His-88, His-90, and Cys-96.

Belongs to the transcriptional regulatory CopG/NikR family. Ni(2+) is required as a cofactor.

Functionally, transcriptional regulator. The protein is Putative nickel-responsive regulator of Brucella abortus (strain S19).